Reading from the N-terminus, the 150-residue chain is 3-hydroxyacyl-[acyl-carrier-protein] dehydratase FabZ (150 aa).

Histidine 51 is a catalytic residue.

The protein belongs to the thioester dehydratase family. FabZ subfamily.

The protein resides in the cytoplasm. It catalyses the reaction a (3R)-hydroxyacyl-[ACP] = a (2E)-enoyl-[ACP] + H2O. Involved in unsaturated fatty acids biosynthesis. Catalyzes the dehydration of short chain beta-hydroxyacyl-ACPs and long chain saturated and unsaturated beta-hydroxyacyl-ACPs. The chain is 3-hydroxyacyl-[acyl-carrier-protein] dehydratase FabZ from Legionella pneumophila (strain Lens).